The sequence spans 251 residues: uncharacterized protein (251 aa).

Belongs to the PaiB family.

This is an uncharacterized protein from Emericella nidulans (strain FGSC A4 / ATCC 38163 / CBS 112.46 / NRRL 194 / M139) (Aspergillus nidulans).